Consider the following 350-residue polypeptide: Probable poly-beta-1,6-N-acetyl-D-glucosamine export protein (350 aa).

10 helical membrane-spanning segments follow: residues 8 to 28 (LVYL…LTQI), 40 to 60 (LVLQ…FIIL), 83 to 103 (YILI…SLLT), 119 to 139 (QWYG…YIIF), 146 to 166 (FNSK…LYYF), 182 to 202 (LSEN…AYMG), 216 to 236 (LVIM…LANG), 254 to 274 (IMFI…FNTI), 276 to 296 (MISA…DSLF), and 308 to 328 (VFLA…GMIL).

This sequence belongs to the acyltransferase 3 family.

It is found in the cell membrane. Its function is as follows. Presumably involved in the export of the biofilm adhesin polysaccharide poly-beta-1,6-N-acetyl-D-glucosamine (PNAG, also referred to as PIA) across the cell membrane. The chain is Probable poly-beta-1,6-N-acetyl-D-glucosamine export protein (icaC) from Staphylococcus aureus (strain NCTC 8325 / PS 47).